Consider the following 205-residue polypeptide: Putative 3-methyladenine DNA glycosylase (205 aa).

Belongs to the DNA glycosylase MPG family.

The sequence is that of Putative 3-methyladenine DNA glycosylase from Bacillus cereus (strain B4264).